We begin with the raw amino-acid sequence, 788 residues long: Endonuclease MutS2 (788 aa).

ATP is bound at residue 332–339 (GPNTGGKT). The Smr domain occupies 713 to 788 (IDLRGLDSEE…GTGVTVVELK (76 aa)).

This sequence belongs to the DNA mismatch repair MutS family. MutS2 subfamily. As to quaternary structure, homodimer. Binds to stalled ribosomes, contacting rRNA.

In terms of biological role, endonuclease that is involved in the suppression of homologous recombination and thus may have a key role in the control of bacterial genetic diversity. Functionally, acts as a ribosome collision sensor, splitting the ribosome into its 2 subunits. Detects stalled/collided 70S ribosomes which it binds and splits by an ATP-hydrolysis driven conformational change. Acts upstream of the ribosome quality control system (RQC), a ribosome-associated complex that mediates the extraction of incompletely synthesized nascent chains from stalled ribosomes and their subsequent degradation. Probably generates substrates for RQC. In Clostridium acetobutylicum (strain ATCC 824 / DSM 792 / JCM 1419 / IAM 19013 / LMG 5710 / NBRC 13948 / NRRL B-527 / VKM B-1787 / 2291 / W), this protein is Endonuclease MutS2.